The following is a 308-amino-acid chain: Lipoyl synthase (308 aa).

[4Fe-4S] cluster is bound by residues C51, C56, C62, C77, C81, C84, and S290. Residues 63 to 279 (WSKRHATFMI…ETIAKSKGFL (217 aa)) form the Radical SAM core domain.

This sequence belongs to the radical SAM superfamily. Lipoyl synthase family. The cofactor is [4Fe-4S] cluster.

Its subcellular location is the cytoplasm. The enzyme catalyses [[Fe-S] cluster scaffold protein carrying a second [4Fe-4S](2+) cluster] + N(6)-octanoyl-L-lysyl-[protein] + 2 oxidized [2Fe-2S]-[ferredoxin] + 2 S-adenosyl-L-methionine + 4 H(+) = [[Fe-S] cluster scaffold protein] + N(6)-[(R)-dihydrolipoyl]-L-lysyl-[protein] + 4 Fe(3+) + 2 hydrogen sulfide + 2 5'-deoxyadenosine + 2 L-methionine + 2 reduced [2Fe-2S]-[ferredoxin]. It participates in protein modification; protein lipoylation via endogenous pathway; protein N(6)-(lipoyl)lysine from octanoyl-[acyl-carrier-protein]: step 2/2. Functionally, catalyzes the radical-mediated insertion of two sulfur atoms into the C-6 and C-8 positions of the octanoyl moiety bound to the lipoyl domains of lipoate-dependent enzymes, thereby converting the octanoylated domains into lipoylated derivatives. The sequence is that of Lipoyl synthase from Pelagibacter ubique (strain HTCC1062).